The following is a 147-amino-acid chain: Large ribosomal subunit protein uL15 (147 aa).

A disordered region spans residues 1-54 (MKLFELQPAPGSKKLPNRKGRGIGSGNGKTGGRGHKGQNARAGGGVRPGFEGGQ). 2 stretches are compositionally biased toward gly residues: residues 22 to 31 (GIGSGNGKTG) and 42 to 52 (AGGGVRPGFEG).

The protein belongs to the universal ribosomal protein uL15 family. In terms of assembly, part of the 50S ribosomal subunit.

In terms of biological role, binds to the 23S rRNA. The polypeptide is Large ribosomal subunit protein uL15 (Ruminiclostridium cellulolyticum (strain ATCC 35319 / DSM 5812 / JCM 6584 / H10) (Clostridium cellulolyticum)).